The sequence spans 509 residues: 2,3-bisphosphoglycerate-independent phosphoglycerate mutase (509 aa).

The Mn(2+) site is built by Asp12 and Ser62. Ser62 functions as the Phosphoserine intermediate in the catalytic mechanism. Substrate is bound by residues His123, 153 to 154, Arg185, Arg191, 260 to 263, and Lys333; these read RD and RPDR. Residues Asp400, His404, Asp441, His442, and His460 each contribute to the Mn(2+) site.

It belongs to the BPG-independent phosphoglycerate mutase family. As to quaternary structure, monomer. Mn(2+) serves as cofactor.

The catalysed reaction is (2R)-2-phosphoglycerate = (2R)-3-phosphoglycerate. The protein operates within carbohydrate degradation; glycolysis; pyruvate from D-glyceraldehyde 3-phosphate: step 3/5. In terms of biological role, catalyzes the interconversion of 2-phosphoglycerate and 3-phosphoglycerate. The chain is 2,3-bisphosphoglycerate-independent phosphoglycerate mutase from Clostridium kluyveri (strain ATCC 8527 / DSM 555 / NBRC 12016 / NCIMB 10680 / K1).